The following is a 254-amino-acid chain: MLLAIDVGNTNTTLGVYDGAVLRRHWRVETSHTRTYDEYGILLRQLFASAGLEPARVSAVVIASVVPPLAFTLEQMCVRYFDRKPMFVGPGMKTGMPILYENPREVGADRVVNAVAAYERWRCALVVVDFGTATTFDVISAKGEYLGGAICPGIGISMDALARSASKLPRVEFAKPPSVVGKNTVASIQAGLVYGYVGMVDGICAQIAAELATPPKVVATGGLAPLIAGVSRSITEVDEHLTLEGLRILHERNR.

Position 6–13 (6–13 (DVGNTNTT)) interacts with ATP. Residues tyrosine 100 and 107-110 (GADR) contribute to the substrate site. The Proton acceptor role is filled by aspartate 109. A K(+)-binding site is contributed by aspartate 129. Threonine 132 is a binding site for ATP. Threonine 184 contacts substrate.

The protein belongs to the type III pantothenate kinase family. In terms of assembly, homodimer. The cofactor is NH4(+). K(+) is required as a cofactor.

It localises to the cytoplasm. The enzyme catalyses (R)-pantothenate + ATP = (R)-4'-phosphopantothenate + ADP + H(+). The protein operates within cofactor biosynthesis; coenzyme A biosynthesis; CoA from (R)-pantothenate: step 1/5. Catalyzes the phosphorylation of pantothenate (Pan), the first step in CoA biosynthesis. This is Type III pantothenate kinase from Anaeromyxobacter dehalogenans (strain 2CP-1 / ATCC BAA-258).